The following is a 181-amino-acid chain: Translation initiation factor IF-3, chloroplastic (181 aa).

The protein belongs to the IF-3 family. Monomer.

The protein localises to the plastid. The protein resides in the chloroplast. Its function is as follows. IF-3 binds to the 30S ribosomal subunit and shifts the equilibrium between 70S ribosomes and their 50S and 30S subunits in favor of the free subunits, thus enhancing the availability of 30S subunits on which protein synthesis initiation begins. The polypeptide is Translation initiation factor IF-3, chloroplastic (Gracilaria tenuistipitata var. liui (Red alga)).